The sequence spans 502 residues: Type-2 serine--tRNA ligase (502 aa).

A304 contributes to the L-serine binding site. Residue C306 participates in Zn(2+) binding. R336 provides a ligand contact to L-serine. ATP contacts are provided by residues R336–E338 and R347–V348. Residues R353–E355 and Q400 each bind L-serine. E355 contacts Zn(2+). E432 lines the ATP pocket. Residue N435 participates in L-serine binding. C461 provides a ligand contact to Zn(2+). R468 provides a ligand contact to ATP.

Belongs to the class-II aminoacyl-tRNA synthetase family. Type-2 seryl-tRNA synthetase subfamily. As to quaternary structure, homodimer. Zn(2+) serves as cofactor.

The protein localises to the cytoplasm. It catalyses the reaction tRNA(Ser) + L-serine + ATP = L-seryl-tRNA(Ser) + AMP + diphosphate + H(+). The catalysed reaction is tRNA(Sec) + L-serine + ATP = L-seryl-tRNA(Sec) + AMP + diphosphate + H(+). It functions in the pathway aminoacyl-tRNA biosynthesis; selenocysteinyl-tRNA(Sec) biosynthesis; L-seryl-tRNA(Sec) from L-serine and tRNA(Sec): step 1/1. Its function is as follows. Catalyzes the attachment of serine to tRNA(Ser). Is also able to aminoacylate tRNA(Sec) with serine, to form the misacylated tRNA L-seryl-tRNA(Sec), which will be further converted into selenocysteinyl-tRNA(Sec). The chain is Type-2 serine--tRNA ligase from Methanococcoides burtonii (strain DSM 6242 / NBRC 107633 / OCM 468 / ACE-M).